Reading from the N-terminus, the 691-residue chain is Inactive TPR repeat-containing thioredoxin TTL3 (691 aa).

Disordered stretches follow at residues 1–153 (MSHS…AVSP) and 174–209 (MASR…TSGK). Ser-8 is subject to Phosphoserine. Positions 19-39 (RFRDLQRNDDDVNKPDFRELD) are enriched in basic and acidic residues. 2 positions are modified to phosphoserine: Ser-42 and Ser-45. A compositionally biased stretch (low complexity) spans 51 to 79 (GSASSSAAATPTSSSGSSGSASGKPSVSS). Residues 83–93 (KRLDDAYKSHS) are compositionally biased toward basic and acidic residues. Composition is skewed to polar residues over residues 94 to 108 (GELS…TTTR), 118 to 140 (SSTG…HTSP), and 175 to 189 (ASRT…CTGT). 8 TPR repeats span residues 220–253 (PEEL…SPGN), 255–287 (AYRS…DPSY), 289–321 (RAHQ…PDQA), 327–362 (QTLE…GADS), 412–445 (AYVL…DQTN), 458–491 (VVRA…DDSN), 492–525 (SVLY…QPSY), and 527–559 (KALL…LPGD). Residues 596-683 (DKFKKSVALP…MVCPSHQFLE (88 aa)) form the Thioredoxin domain.

As to quaternary structure, interacts with BRL2. In terms of tissue distribution, expressed in embryos and organ primordia in shoot and root. In primary and cauline leaves and petals, is expressed in hydathodes, guard cells, petiole cells and cells associated with differentiating vascular bundles.

Functionally, involved in osmotic and salt stress tolerance. May play a role in the control of meristematic cell size during osmotic stress. May function as an adapter protein for BRL2 and may be required for signaling affecting leaf vascular tissue pattern formation. The protein is Inactive TPR repeat-containing thioredoxin TTL3 of Arabidopsis thaliana (Mouse-ear cress).